Consider the following 198-residue polypeptide: Na(+)-translocating NADH-quinone reductase subunit E (198 aa).

A run of 6 helical transmembrane segments spans residues Ala-11–Val-31, Val-35–Val-55, Phe-77–Ile-97, Gly-110–Val-130, Val-140–Ile-160, and Leu-176–Val-196.

Belongs to the NqrDE/RnfAE family. As to quaternary structure, composed of six subunits; NqrA, NqrB, NqrC, NqrD, NqrE and NqrF.

The protein localises to the cell inner membrane. It catalyses the reaction a ubiquinone + n Na(+)(in) + NADH + H(+) = a ubiquinol + n Na(+)(out) + NAD(+). Its function is as follows. NQR complex catalyzes the reduction of ubiquinone-1 to ubiquinol by two successive reactions, coupled with the transport of Na(+) ions from the cytoplasm to the periplasm. NqrA to NqrE are probably involved in the second step, the conversion of ubisemiquinone to ubiquinol. The protein is Na(+)-translocating NADH-quinone reductase subunit E of Serratia proteamaculans (strain 568).